Here is a 405-residue protein sequence, read N- to C-terminus: Argininosuccinate synthase (405 aa).

11–19 provides a ligand contact to ATP; sequence AYSGGLDTS. Tyr90 contributes to the L-citrulline binding site. An ATP-binding site is contributed by Gly119. Thr121, Asn125, and Asp126 together coordinate L-aspartate. An L-citrulline-binding site is contributed by Asn125. L-citrulline contacts are provided by Arg129, Ser178, Ser187, Glu263, and Tyr275.

The protein belongs to the argininosuccinate synthase family. Type 1 subfamily. Homotetramer.

The protein resides in the cytoplasm. The catalysed reaction is L-citrulline + L-aspartate + ATP = 2-(N(omega)-L-arginino)succinate + AMP + diphosphate + H(+). The protein operates within amino-acid biosynthesis; L-arginine biosynthesis; L-arginine from L-ornithine and carbamoyl phosphate: step 2/3. The chain is Argininosuccinate synthase from Legionella pneumophila subsp. pneumophila (strain Philadelphia 1 / ATCC 33152 / DSM 7513).